The chain runs to 142 residues: Ribonuclease VapC25 (142 aa).

Residues 3–139 enclose the PINc domain; that stretch reads LIDVNVLLAA…ARFASVRHIR (137 aa). The Mg(2+) site is built by D5 and D108.

The protein belongs to the PINc/VapC protein family. The cofactor is Mg(2+).

In terms of biological role, toxic component of a type II toxin-antitoxin (TA) system. An RNase. Upon expression in M.smegmatis inhibits colony formation. Its toxic effect is neutralized by coexpression with cognate antitoxin VapB25. The sequence is that of Ribonuclease VapC25 from Mycobacterium tuberculosis (strain ATCC 25618 / H37Rv).